The sequence spans 297 residues: Protease HtpX homolog (297 aa).

2 helical membrane-spanning segments follow: residues 14-34 and 39-59; these read IFLI…AGYL and YQFG…SMIF. Position 143 (His-143) interacts with Zn(2+). Residue Glu-144 is part of the active site. His-147 contacts Zn(2+). Transmembrane regions (helical) follow at residues 153-173 and 196-216; these read IRIS…ASMG and IVFL…ASMV. Glu-225 is a binding site for Zn(2+).

This sequence belongs to the peptidase M48B family. Requires Zn(2+) as cofactor.

The protein resides in the cell membrane. This chain is Protease HtpX homolog, found in Streptococcus uberis (strain ATCC BAA-854 / 0140J).